We begin with the raw amino-acid sequence, 492 residues long: N-succinylglutamate 5-semialdehyde dehydrogenase (492 aa).

220 to 225 serves as a coordination point for NAD(+); it reads GSANTG. Catalysis depends on residues Glu243 and Cys277.

It belongs to the aldehyde dehydrogenase family. AstD subfamily.

The catalysed reaction is N-succinyl-L-glutamate 5-semialdehyde + NAD(+) + H2O = N-succinyl-L-glutamate + NADH + 2 H(+). It participates in amino-acid degradation; L-arginine degradation via AST pathway; L-glutamate and succinate from L-arginine: step 4/5. Its function is as follows. Catalyzes the NAD-dependent reduction of succinylglutamate semialdehyde into succinylglutamate. The sequence is that of N-succinylglutamate 5-semialdehyde dehydrogenase from Escherichia coli O7:K1 (strain IAI39 / ExPEC).